The primary structure comprises 306 residues: UDP-3-O-acyl-N-acetylglucosamine deacetylase (306 aa).

Zn(2+)-binding residues include His79, His239, and Asp243. His266 acts as the Proton donor in catalysis.

This sequence belongs to the LpxC family. The cofactor is Zn(2+).

It catalyses the reaction a UDP-3-O-[(3R)-3-hydroxyacyl]-N-acetyl-alpha-D-glucosamine + H2O = a UDP-3-O-[(3R)-3-hydroxyacyl]-alpha-D-glucosamine + acetate. Its pathway is glycolipid biosynthesis; lipid IV(A) biosynthesis; lipid IV(A) from (3R)-3-hydroxytetradecanoyl-[acyl-carrier-protein] and UDP-N-acetyl-alpha-D-glucosamine: step 2/6. Its function is as follows. Catalyzes the hydrolysis of UDP-3-O-myristoyl-N-acetylglucosamine to form UDP-3-O-myristoylglucosamine and acetate, the committed step in lipid A biosynthesis. This chain is UDP-3-O-acyl-N-acetylglucosamine deacetylase, found in Haemophilus ducreyi (strain 35000HP / ATCC 700724).